Reading from the N-terminus, the 72-residue chain is Long neurotoxin 1 (72 aa).

5 disulfides stabilise this stretch: Cys3/Cys21, Cys14/Cys42, Cys27/Cys31, Cys46/Cys57, and Cys58/Cys63.

It belongs to the three-finger toxin family. Long-chain subfamily. Type II alpha-neurotoxin sub-subfamily. As to expression, expressed by the venom gland.

Its subcellular location is the secreted. Functionally, binds with high affinity to muscular (alpha-1/CHRNA1) and neuronal (alpha-7/CHRNA7) nicotinic acetylcholine receptor (nAChR) and inhibits acetylcholine from binding to the receptor, thereby impairing neuromuscular and neuronal transmission. The polypeptide is Long neurotoxin 1 (Naja anchietae (Anchieta's cobra)).